Reading from the N-terminus, the 64-residue chain is DNA gyrase inhibitor YacG (64 aa).

Zn(2+) contacts are provided by C10, C13, C29, and C33.

It belongs to the DNA gyrase inhibitor YacG family. As to quaternary structure, interacts with GyrB. Zn(2+) serves as cofactor.

Its function is as follows. Inhibits all the catalytic activities of DNA gyrase by preventing its interaction with DNA. Acts by binding directly to the C-terminal domain of GyrB, which probably disrupts DNA binding by the gyrase. This is DNA gyrase inhibitor YacG from Pectobacterium atrosepticum (strain SCRI 1043 / ATCC BAA-672) (Erwinia carotovora subsp. atroseptica).